The following is a 610-amino-acid chain: Probable galacturonosyltransferase 5 (610 aa).

Residues 1-6 are Cytoplasmic-facing; it reads MNQVRR. A helical; Signal-anchor for type II membrane protein membrane pass occupies residues 7-27; sequence WQRILILSLLLLSVLAPIVFV. Residues 28–610 lie on the Lumenal side of the membrane; it reads SNRLKSITSV…PHLQRCNIHD (583 aa). Residues 86-101 show a composition bias toward polar residues; sequence LSNSSDKSNDTVQSNE. The disordered stretch occupies residues 86–170; the sequence is LSNSSDKSND…KNTRVQLERA (85 aa). 2 N-linked (GlcNAc...) asparagine glycosylation sites follow: N88 and N94. Residues 110–123 show a composition bias toward basic and acidic residues; it reads EVDKGNNHKPKEEQ. Polar residues predominate over residues 124 to 135; it reads AVSQKTTVSSNA. Residues 139 to 170 are compositionally biased toward basic and acidic residues; that stretch reads ISARDIQLNHKTEFRPPSSKSEKNTRVQLERA. N-linked (GlcNAc...) asparagine glycosylation is found at N196, N338, N401, and N475.

Belongs to the glycosyltransferase 8 family. Expressed in roots, inflorescences, siliques, leaves and stems.

The protein localises to the golgi apparatus membrane. It functions in the pathway glycan metabolism; pectin biosynthesis. Functionally, may be involved in pectin and/or xylans biosynthesis in cell walls. The polypeptide is Probable galacturonosyltransferase 5 (GAUT5) (Arabidopsis thaliana (Mouse-ear cress)).